Consider the following 473-residue polypeptide: Cysteine--tRNA ligase (473 aa).

Cys-30 serves as a coordination point for Zn(2+). A 'HIGH' region motif is present at residues 32–42; the sequence is MTVYDYCHIGH. Positions 213, 238, and 242 each coordinate Zn(2+). The 'KMSKS' region signature appears at 270 to 274; that stretch reads KMSKS. Lys-273 contributes to the ATP binding site.

The protein belongs to the class-I aminoacyl-tRNA synthetase family. In terms of assembly, monomer. Zn(2+) is required as a cofactor.

It localises to the cytoplasm. It catalyses the reaction tRNA(Cys) + L-cysteine + ATP = L-cysteinyl-tRNA(Cys) + AMP + diphosphate. The polypeptide is Cysteine--tRNA ligase (Acinetobacter baumannii (strain AB307-0294)).